Here is a 464-residue protein sequence, read N- to C-terminus: L-cysteine desulfhydrase-like protein lolT2 (464 aa).

K227 is modified (N6-(pyridoxal phosphate)lysine).

The protein belongs to the class-V pyridoxal-phosphate-dependent aminotransferase family. Pyridoxal 5'-phosphate serves as cofactor.

Its pathway is alkaloid biosynthesis. Functionally, L-cysteine desulfhydrase-like protein; part of the gene cluster that mediates the biosynthesis of loline alkaloids, potent insecticidal agents composed of a pyrrolizidine ring system and an uncommon ether bridge linking carbons 2 and 7. Lolines are structurally differentiated by the various modifications of the L-amino group and include norloline, loline, N-methylloline, N-acetylloline, N-acetylnorloline, and N-formylloline. The first committed step is the condensation of O-acetyl-L-homoserine (derived from L-aspartic acid) and L-proline, probably catalyzed by the gamma-type pyridoxal 5'-phosphate(PLP)-dependent enzyme lolC, to give the diamino diacid, NACPP. Ensuing cyclization, decarboxylation, and acetylation steps yield 1-exo-acetamidopyrrolizidine (AcAP). LolO is required for installation of the ether bridge upon the pathway intermediate, 1-exo-acetamidopyrrolizidine (AcAP). In sequential 2-oxoglutarate- and O(2)-consuming steps, lolO removes hydrogens from C2 and C7 of AcAP to form both carbon-oxygen bonds in N-acetylnorloline (NANL), the precursor to all other lolines. The enzymes lolD, lolE, lolF and lolT have also been proposed to be involved in the ether-bridge installation. Further processing of the exocyclic moiety of NANL by fungal N-acetamidase (LolN), methyltransferase (LolM), and cytochrome P450 (LolP) enzymes, with occasional involvement of a plant acetyltransferase, generates the other known lolines. LolN transforms NANL to norlonine which is monomethylated and dimethylated to respectively lonine and N-methyllonine (NML) by lolM. LolP catalyzes hydroxylation of the methyl group in N-methylloline (NML) and further oxygenation to N-formylloline (NFL). A plant acetyltransferase is responsible for the acetylation of loline to form N-acetylloline (NAL). LolA might interact with aspartate kinase to prevent feedback inhibition of its activity by these end products and thereby promote production of L-homoserine from L-aspartate. This is L-cysteine desulfhydrase-like protein lolT2 from Epichloe uncinata (Endophyte fungus).